The sequence spans 522 residues: Sensory neuron membrane protein 1 (522 aa).

At 1–11 the chain is on the cytoplasmic side; the sequence is MQLAKPLKYAA. A helical transmembrane segment spans residues 12–32; that stretch reads ISGIVAFVGLMFGWVIFPAIL. The Extracellular portion of the chain corresponds to 33 to 458; it reads KSQLKKEMAL…SQLFIPKRVV (426 aa). N-linked (GlcNAc...) asparagine glycosylation is found at N67, N105, and N229. Intrachain disulfides connect C268-C333, C297-C352, and C335-C341. N-linked (GlcNAc...) asparagine glycosylation is present at N440. A helical transmembrane segment spans residues 459 to 479; sequence SVVCWCMISFGSLGVIAAVIF. At 480–522 the chain is on the cytoplasmic side; that stretch reads HFKGDIMHLAVAGDNSVSKIKPENDENKEVGVMGQNQEPAKVM. Residues 500–522 form a disordered region; it reads KPENDENKEVGVMGQNQEPAKVM. Positions 513–522 are enriched in polar residues; that stretch reads GQNQEPAKVM.

Belongs to the CD36 family. Principal component of the olfactory cilia membrane. Detected in both male and female antennae but not present in leg, abdomen, thorax or head.

The protein localises to the cell membrane. Its function is as follows. Plays an olfactory role that is not restricted to pheromone sensitivity. The chain is Sensory neuron membrane protein 1 from Bombyx mori (Silk moth).